We begin with the raw amino-acid sequence, 620 residues long: Arginine--tRNA ligase (620 aa).

The 'HIGH' region signature appears at 147-157 (ANPTGPIHIGG).

The protein belongs to the class-I aminoacyl-tRNA synthetase family. As to quaternary structure, monomer.

It localises to the cytoplasm. It carries out the reaction tRNA(Arg) + L-arginine + ATP = L-arginyl-tRNA(Arg) + AMP + diphosphate. This Bifidobacterium longum (strain NCC 2705) protein is Arginine--tRNA ligase.